The chain runs to 160 residues: NADH-quinone oxidoreductase subunit B (160 aa).

Positions 37, 38, 102, and 132 each coordinate [4Fe-4S] cluster.

It belongs to the complex I 20 kDa subunit family. NDH-1 is composed of 14 different subunits. Subunits NuoB, C, D, E, F, and G constitute the peripheral sector of the complex. It depends on [4Fe-4S] cluster as a cofactor.

It is found in the cell inner membrane. It carries out the reaction a quinone + NADH + 5 H(+)(in) = a quinol + NAD(+) + 4 H(+)(out). In terms of biological role, NDH-1 shuttles electrons from NADH, via FMN and iron-sulfur (Fe-S) centers, to quinones in the respiratory chain. Couples the redox reaction to proton translocation (for every two electrons transferred, four hydrogen ions are translocated across the cytoplasmic membrane), and thus conserves the redox energy in a proton gradient. In Cupriavidus metallidurans (strain ATCC 43123 / DSM 2839 / NBRC 102507 / CH34) (Ralstonia metallidurans), this protein is NADH-quinone oxidoreductase subunit B.